Here is a 626-residue protein sequence, read N- to C-terminus: Colicin-Ib (626 aa).

Positions 276–286 are enriched in polar residues; it reads QQLTQQKNTPD. The tract at residues 276–308 is disordered; that stretch reads QQLTQQKNTPDGKTIVSPEKFPGRSSTNHSIVV. A helical membrane pass occupies residues 588-612; that stretch reads FSVMLGTPVGILGFAIIMAAVSALV.

It belongs to the channel forming colicin family.

The protein resides in the host membrane. Functionally, this colicin is a channel-forming colicin. This class of transmembrane toxins depolarize the cytoplasmic membrane, leading to dissipation of cellular energy. Colicins are polypeptide toxins produced by and active against E.coli and closely related bacteria. The protein is Colicin-Ib (cib) of Escherichia coli.